The chain runs to 379 residues: Succinyl-diaminopimelate desuccinylase (379 aa).

H70 serves as a coordination point for Zn(2+). Residue D72 is part of the active site. Zn(2+) is bound at residue D103. E137 (proton acceptor) is an active-site residue. Zn(2+) is bound by residues E138, E166, and H352.

The protein belongs to the peptidase M20A family. DapE subfamily. In terms of assembly, homodimer. Zn(2+) serves as cofactor. It depends on Co(2+) as a cofactor.

It carries out the reaction N-succinyl-(2S,6S)-2,6-diaminopimelate + H2O = (2S,6S)-2,6-diaminopimelate + succinate. Its pathway is amino-acid biosynthesis; L-lysine biosynthesis via DAP pathway; LL-2,6-diaminopimelate from (S)-tetrahydrodipicolinate (succinylase route): step 3/3. In terms of biological role, catalyzes the hydrolysis of N-succinyl-L,L-diaminopimelic acid (SDAP), forming succinate and LL-2,6-diaminopimelate (DAP), an intermediate involved in the bacterial biosynthesis of lysine and meso-diaminopimelic acid, an essential component of bacterial cell walls. The polypeptide is Succinyl-diaminopimelate desuccinylase (Burkholderia lata (strain ATCC 17760 / DSM 23089 / LMG 22485 / NCIMB 9086 / R18194 / 383)).